The chain runs to 198 residues: Cyclotides mra4/mra5 (198 aa).

Residues 1-22 (MESNKMVVGVLLIAAFALPALA) form the signal peptide. Positions 23–79 (LFERDVITHETIEAVLKKSTPNSNTMLQEDAINALTGKTLISQTILEETLLKNGVVG) are excised as a propeptide. Cystine bridges form between Cys-84/Cys-100, Cys-88/Cys-102, and Cys-93/Cys-107. Residues 111–163 (SLALPTLEKDVITPEALEAVLKSNGGAIVNTKTIISNAIFEETLLNNANHVLG) constitute a propeptide that is removed on maturation. 3 disulfide bridges follow: Cys-167-Cys-183, Cys-171-Cys-185, and Cys-176-Cys-190. The propeptide occupies 194–198 (SLALN).

Belongs to the cyclotide family. Bracelet subfamily. In terms of processing, these are cyclic peptides. Post-translationally, the mature peptides contain 3 disulfide bonds each.

In terms of biological role, probably participates in a plant defense mechanism. The polypeptide is Cyclotides mra4/mra5 (Melicytus ramiflorus (Whitey wood)).